Here is a 229-residue protein sequence, read N- to C-terminus: tRNA (guanine-N(7)-)-methyltransferase (229 aa).

S-adenosyl-L-methionine contacts are provided by E62, E87, D114, and D137. The active site involves D137. K141 provides a ligand contact to substrate. An interaction with RNA region spans residues 143–148 (KHNKRR). Substrate contacts are provided by residues D173 and 208-211 (TKFE).

This sequence belongs to the class I-like SAM-binding methyltransferase superfamily. TrmB family.

It carries out the reaction guanosine(46) in tRNA + S-adenosyl-L-methionine = N(7)-methylguanosine(46) in tRNA + S-adenosyl-L-homocysteine. It participates in tRNA modification; N(7)-methylguanine-tRNA biosynthesis. Functionally, catalyzes the formation of N(7)-methylguanine at position 46 (m7G46) in tRNA. This Francisella tularensis subsp. novicida (strain U112) protein is tRNA (guanine-N(7)-)-methyltransferase.